The sequence spans 599 residues: Proline--tRNA ligase (599 aa).

This sequence belongs to the class-II aminoacyl-tRNA synthetase family. ProS type 1 subfamily. In terms of assembly, homodimer.

The protein resides in the cytoplasm. It catalyses the reaction tRNA(Pro) + L-proline + ATP = L-prolyl-tRNA(Pro) + AMP + diphosphate. Its function is as follows. Catalyzes the attachment of proline to tRNA(Pro) in a two-step reaction: proline is first activated by ATP to form Pro-AMP and then transferred to the acceptor end of tRNA(Pro). As ProRS can inadvertently accommodate and process non-cognate amino acids such as alanine and cysteine, to avoid such errors it has two additional distinct editing activities against alanine. One activity is designated as 'pretransfer' editing and involves the tRNA(Pro)-independent hydrolysis of activated Ala-AMP. The other activity is designated 'posttransfer' editing and involves deacylation of mischarged Ala-tRNA(Pro). The misacylated Cys-tRNA(Pro) is not edited by ProRS. The protein is Proline--tRNA ligase of Prochlorococcus marinus (strain MIT 9313).